The sequence spans 1089 residues: Importin subunit beta-3 (1089 aa).

An N-acetylserine modification is found at Ser2. HEAT repeat units follow at residues 6-39 (EEVNRTLLQIVQAFASPDNQIRSVAEKALSEEWI), 44-78 (IEYLLTFLAEQAAFSQDTTVAALSAVLFRKLALKA), 96-129 (KEVLAQIRSSLLKGFLSERADSIRHKLSDAIAEC), 138-165 (PELLQALIESLKSGNPNFRESSFRILTT), 175-207 (INSILPIFQSGFTDASDNVKIAAVTAFVGYFKQ), 216-252 (LGILLPSLLNSLPRFLDDGKDDALASVFESLIELVEL), 260-295 (MFDQIIQFTDMVIKNKDLEPPARTTALELLTVFSEN), 304-359 (QNYG…ALKL), 361-395 (GEYLAAPLFQYLQQMITSTEWRERFAAMMALSSAA), 399-439 (ADVL…STDF), 441-481 (PFIQ…FSEF), 484-524 (KDIL…AEAA), 526-568 (NKFI…GFAV), 571-613 (EKFH…CRIL), 615-689 (DDFV…ATLL), 692-735 (QFAV…LLAA), 742-781 (ELVLLWHKASSKLIGGLMSEPMPEITQVYHNSLVNGIKVM), 788-849 (EDQL…LKTT), 852-890 (HYLKNLENIWPMINTFLLDNEPILVIFALVVIGDLIQYG), 898-930 (KNAFIPKVTECLISPDARIRQAASYIIGVCAQY), 938-978 (VCIP…LYAY), 986-1017 (DTYTANWFKTLPTITDKEAASFNYQFLSQLIE), 1028-1063 (NISAVVDSVIQALNERSLTEREGQTVISSVKKLLGF), and 1066-1089 (SSDAMAIFNRYPADIMEKVHKWFA). At Thr830 the chain carries Phosphothreonine.

The protein belongs to the importin beta family. Importin beta-3 subfamily. In terms of assembly, interacts with Ran (GSP1); interacts specifically with the GTP-bound form of Ran (GTP-Ran), protecting it from GTP hydrolysis and nucleotide exchange. Interacts with RPL25; this interaction is dissociated by binding to Ran-GTP. Interacts with YAP1; this interaction is dissociated by binding to Ran-GTP. Interacts with NOP1; via its rg-NLS. Interacts with SOF1; via its cNLS. Interacts with histones H3 and H4; via their NLS. Interacts with ABF1.

It localises to the cytoplasm. It is found in the nucleus. In terms of biological role, functions in nuclear protein import as nuclear transport receptor. Serves as receptor for classical and arginine/glycine-rich nuclear localization signals (cNLS and rg-NLS) in cargo substrates. Its predominant cargo substrate seems to be ribosomal proteins and ribosome biogenesis trans- and cis-acting factors. Required for nuclear transport of YAP1, NOP1 and SOF1. Mediates the nuclear import of histones H3 and H4. Mediates docking of the importin/substrate complex to the nuclear pore complex (NPC) through binding to repeat-containing nucleoporins. The complex is subsequently translocated through the pore by an energy requiring, Ran-dependent mechanism. At the nucleoplasmic side of the NPC, GTP-Ran binding leads to release of the cargo. The importin is re-exported from the nucleus to the cytoplasm where GTP hydrolysis releases Ran from importin. The directionality of nuclear import is thought to be conferred by an asymmetric distribution of the GTP- and GDP-bound forms of Ran between the cytoplasm and nucleus. Its function is as follows. Plays a role in protein secretion. The chain is Importin subunit beta-3 from Saccharomyces cerevisiae (strain ATCC 204508 / S288c) (Baker's yeast).